We begin with the raw amino-acid sequence, 90 residues long: MYSLELSLRYSPFPLSIQKKEFDDVKRIYDEIKTAMNETLESSNLIELSCDKVQDKLITVRAKEIISVQIYEKSSVAGGAKRPGFSLDID.

Belongs to the UPF0367 family.

The chain is UPF0367 protein P9301_01411 from Prochlorococcus marinus (strain MIT 9301).